We begin with the raw amino-acid sequence, 370 residues long: UDP-N-acetylglucosamine--N-acetylmuramyl-(pentapeptide) pyrophosphoryl-undecaprenol N-acetylglucosamine transferase (370 aa).

UDP-N-acetyl-alpha-D-glucosamine contacts are provided by residues 10–12 (TGG), N124, S196, I253, and Q298.

Belongs to the glycosyltransferase 28 family. MurG subfamily.

The protein localises to the cell membrane. It carries out the reaction Mur2Ac(oyl-L-Ala-gamma-D-Glu-L-Lys-D-Ala-D-Ala)-di-trans,octa-cis-undecaprenyl diphosphate + UDP-N-acetyl-alpha-D-glucosamine = beta-D-GlcNAc-(1-&gt;4)-Mur2Ac(oyl-L-Ala-gamma-D-Glu-L-Lys-D-Ala-D-Ala)-di-trans,octa-cis-undecaprenyl diphosphate + UDP + H(+). The protein operates within cell wall biogenesis; peptidoglycan biosynthesis. In terms of biological role, cell wall formation. Catalyzes the transfer of a GlcNAc subunit on undecaprenyl-pyrophosphoryl-MurNAc-pentapeptide (lipid intermediate I) to form undecaprenyl-pyrophosphoryl-MurNAc-(pentapeptide)GlcNAc (lipid intermediate II). The sequence is that of UDP-N-acetylglucosamine--N-acetylmuramyl-(pentapeptide) pyrophosphoryl-undecaprenol N-acetylglucosamine transferase from Limosilactobacillus reuteri subsp. reuteri (strain JCM 1112) (Lactobacillus reuteri).